The chain runs to 63 residues: uncharacterized protein (63 aa).

Positions 1 to 21 are cleaved as a signal peptide; that stretch reads MNRALILTFVLFFALFAISSA.

This is an uncharacterized protein from Dictyostelium discoideum (Social amoeba).